Here is a 105-residue protein sequence, read N- to C-terminus: Co-chaperonin GroES 3 (105 aa).

Belongs to the GroES chaperonin family. As to quaternary structure, heptamer of 7 subunits arranged in a ring. Interacts with the chaperonin GroEL.

The protein resides in the cytoplasm. Its function is as follows. Together with the chaperonin GroEL, plays an essential role in assisting protein folding. The GroEL-GroES system forms a nano-cage that allows encapsulation of the non-native substrate proteins and provides a physical environment optimized to promote and accelerate protein folding. GroES binds to the apical surface of the GroEL ring, thereby capping the opening of the GroEL channel. The sequence is that of Co-chaperonin GroES 3 from Rhizobium meliloti (strain 1021) (Ensifer meliloti).